Consider the following 729-residue polypeptide: DNA topoisomerase 3 (729 aa).

The region spanning 3 to 136 (KSVVIAEKPS…IKRLWISSVT (134 aa)) is the Toprim domain. Residues Glu9 and Asp105 each coordinate Mg(2+). The 442-residue stretch at 153 to 594 (YDNLYASAVA…EMKNYTKEIV (442 aa)) folds into the Topo IA-type catalytic domain. The interaction with DNA stretch occupies residues 187-192 (NCGRVQ). The O-(5'-phospho-DNA)-tyrosine intermediate role is filled by Tyr310. Residues 686–713 (ERRKKESGNKADKRDVQKYMKQQKKEEE) show a composition bias toward basic and acidic residues. The segment at 686–718 (ERRKKESGNKADKRDVQKYMKQQKKEEEPLNNP) is disordered.

The protein belongs to the type IA topoisomerase family. Requires Mg(2+) as cofactor.

It catalyses the reaction ATP-independent breakage of single-stranded DNA, followed by passage and rejoining.. Functionally, releases the supercoiling and torsional tension of DNA, which is introduced during the DNA replication and transcription, by transiently cleaving and rejoining one strand of the DNA duplex. Introduces a single-strand break via transesterification at a target site in duplex DNA. The scissile phosphodiester is attacked by the catalytic tyrosine of the enzyme, resulting in the formation of a DNA-(5'-phosphotyrosyl)-enzyme intermediate and the expulsion of a 3'-OH DNA strand. The free DNA strand then undergoes passage around the unbroken strand, thus removing DNA supercoils. Finally, in the religation step, the DNA 3'-OH attacks the covalent intermediate to expel the active-site tyrosine and restore the DNA phosphodiester backbone. The chain is DNA topoisomerase 3 from Bacillus cereus (strain ZK / E33L).